A 1053-amino-acid chain; its full sequence is Mgp-operon protein 3 (1053 aa).

The N-terminal stretch at 1-25 (MKTMRKQIYKKAYWLLLPFLPLALA) is a signal peptide. Disordered regions lie at residues 162 to 207 (SLAK…GFKL) and 224 to 261 (EPID…GGSS). A compositionally biased stretch (basic and acidic residues) spans 164–175 (AKEKGKTQREVH). Positions 179 to 207 (GQANQWTSQRNQHDLNNNPSPNASTGFKL) are enriched in polar residues. The helical transmembrane segment at 946–966 (VGSSVGILFILLVLGLGIGIP) threads the bilayer. Residues 1024–1053 (AAFLKPPVQPPSKPEGEQKAVEVKSEETKS) form a disordered region. Residues 1037 to 1053 (PEGEQKAVEVKSEETKS) are compositionally biased toward basic and acidic residues.

The protein resides in the cell membrane. In Mycoplasma genitalium (strain ATCC 33530 / DSM 19775 / NCTC 10195 / G37) (Mycoplasmoides genitalium), this protein is Mgp-operon protein 3.